The following is a 146-amino-acid chain: Transcriptional regulator MraZ (146 aa).

2 SpoVT-AbrB domains span residues 9–55 and 81–124; these read TSAL…PRPV and AMDV…DAQR.

The protein belongs to the MraZ family. Forms oligomers.

The protein resides in the cytoplasm. It is found in the nucleoid. The chain is Transcriptional regulator MraZ from Leptothrix cholodnii (strain ATCC 51168 / LMG 8142 / SP-6) (Leptothrix discophora (strain SP-6)).